Here is a 700-residue protein sequence, read N- to C-terminus: Mitosis inducer protein blt1 (700 aa).

2 stretches are compositionally biased toward polar residues: residues Met1–Gln11 and Pro43–Asn53. Disordered regions lie at residues Met1–Asn53 and Thr266–Gln293. Positions Gly273–Gly284 are enriched in low complexity. Residues Ser496 to Gln575 are a coiled coil. Disordered regions lie at residues Phe634–Ser659 and Ser671–Met700. Phosphoserine is present on Ser636.

Interacts with cdr2, mid1 and sad1.

Its subcellular location is the cytoplasm. The protein resides in the cytoskeleton. At the onset of mitosis, forms a medial ring structure before the arrangement of the medial actin ring. Essential for the central positioning of the division septum before the cell divides. The chain is Mitosis inducer protein blt1 (blt1) from Schizosaccharomyces pombe (strain 972 / ATCC 24843) (Fission yeast).